The chain runs to 610 residues: Probable galacturonosyltransferase 5 (610 aa).

The Cytoplasmic segment spans residues 1 to 6; the sequence is MNQVRR. The chain crosses the membrane as a helical; Signal-anchor for type II membrane protein span at residues 7–27; it reads WQRILILSLLLLSVLAPIVFV. Residues 28–610 lie on the Lumenal side of the membrane; the sequence is SNRLKSITSV…PHLQRCNIHD (583 aa). Positions 86 to 101 are enriched in polar residues; the sequence is LSNSSDKSNDTVQSNE. Residues 86–170 form a disordered region; it reads LSNSSDKSND…KNTRVQLERA (85 aa). 2 N-linked (GlcNAc...) asparagine glycosylation sites follow: N88 and N94. The span at 110–123 shows a compositional bias: basic and acidic residues; the sequence is EVDKGNNHKPKEEQ. Residues 124 to 135 show a composition bias toward polar residues; it reads AVSQKTTVSSNA. The segment covering 139–170 has biased composition (basic and acidic residues); sequence ISARDIQLNHKTEFRPPSSKSEKNTRVQLERA. N-linked (GlcNAc...) asparagine glycosylation is found at N196, N338, N401, and N475.

This sequence belongs to the glycosyltransferase 8 family. In terms of tissue distribution, expressed in roots, inflorescences, siliques, leaves and stems.

The protein localises to the golgi apparatus membrane. It participates in glycan metabolism; pectin biosynthesis. In terms of biological role, may be involved in pectin and/or xylans biosynthesis in cell walls. In Arabidopsis thaliana (Mouse-ear cress), this protein is Probable galacturonosyltransferase 5 (GAUT5).